Here is a 280-residue protein sequence, read N- to C-terminus: Probable holocytochrome-c-type synthase (280 aa).

Residues 1-95 are disordered; the sequence is MGSSQSTPKV…FALPTKREKS (95 aa). HRM repeat units lie at residues 35-40 and 56-61; these read QCPLTP and ACPVGA.

The protein belongs to the cytochrome c-type heme lyase family.

It is found in the mitochondrion inner membrane. It catalyses the reaction holo-[cytochrome c] = apo-[cytochrome c] + heme b. In terms of biological role, probable lyase that catalyzes the covalent linking of the heme group to the cytochrome C apoprotein to produce the mature functional cytochrome. The polypeptide is Probable holocytochrome-c-type synthase (cchl-1) (Caenorhabditis elegans).